A 198-amino-acid polypeptide reads, in one-letter code: 3-isopropylmalate dehydratase small subunit (198 aa).

Belongs to the LeuD family. LeuD type 1 subfamily. Heterodimer of LeuC and LeuD.

The catalysed reaction is (2R,3S)-3-isopropylmalate = (2S)-2-isopropylmalate. Its pathway is amino-acid biosynthesis; L-leucine biosynthesis; L-leucine from 3-methyl-2-oxobutanoate: step 2/4. Its function is as follows. Catalyzes the isomerization between 2-isopropylmalate and 3-isopropylmalate, via the formation of 2-isopropylmaleate. In Mycobacterium avium (strain 104), this protein is 3-isopropylmalate dehydratase small subunit.